The primary structure comprises 423 residues: MSEDQGKDYTLESDSELRFEIEQKDAKVLVSLVSGFAELFGTELVKKKQYEFGVGAKVAIFTYQGCVLHVSGKMDVCYISKETPMVQYVNCHAALEQFRMEAEEKDRYGPVAMVVGPMDVGKSTLCRILLNYAVRVGRRPLYADLDVGQGSIAISGSVATILIERPANVEEGFAKTAPLVYHFGHKSPSGNSVLYNAVVSKMAEVTLQSLNSNKRTKSSGIIINTCGWVKGSGYAHLLHAAKAYGACAIFVLDQERLYNELLRDVPKGVHVVLLPKSGGVVERSKELRHEARDQRIKEYFYGNTRAPFYPFSFEVKFQDLRLYKIGAPPLPDSCMPIGMKAEDNKTKVVAVTPTPALIHHVLALSFAESVEDDVIGTNVAGFCCVTEVDMERQAVMLLSPQPRPLPPNALLLWSELQFMDNHT.

Residues Glu16, Lys57, and 119–124 (DVGKST) contribute to the ATP site.

The protein belongs to the Clp1 family. Clp1 subfamily.

The protein localises to the nucleus. Required for endonucleolytic cleavage during polyadenylation-dependent pre-mRNA 3'-end formation. The sequence is that of Protein CLP1 homolog (cbc) from Drosophila melanogaster (Fruit fly).